The chain runs to 342 residues: Cell cycle control protein 50C (342 aa).

Over 1–33 (MEMMPQYDLSRLPENTALKQQTLPTQQLNLSAS) the chain is Cytoplasmic. Residues 34-54 (VVLSIFFITGGFCLSIGIILL) form a helical membrane-spanning segment. Residues 55–306 (LSAKSTKKIE…STLTWIGGGG (252 aa)) lie on the Extracellular side of the membrane. 4 N-linked (GlcNAc...) asparagine glycosylation sites follow: N66, N80, N89, and N205. The helical transmembrane segment at 307–327 (LFLGLTYTVTGALTLLASFAI) threads the bilayer. Over 328 to 342 (LTIHLMLKRSKLNFL) the chain is Cytoplasmic.

The protein belongs to the CDC50/LEM3 family. As to expression, specifically expressed in testis.

The protein localises to the membrane. In Mus musculus (Mouse), this protein is Cell cycle control protein 50C (Tmem30c).